A 113-amino-acid chain; its full sequence is Large ribosomal subunit protein bL19 (113 aa).

Belongs to the bacterial ribosomal protein bL19 family.

This protein is located at the 30S-50S ribosomal subunit interface and may play a role in the structure and function of the aminoacyl-tRNA binding site. This is Large ribosomal subunit protein bL19 from Mycolicibacterium vanbaalenii (strain DSM 7251 / JCM 13017 / BCRC 16820 / KCTC 9966 / NRRL B-24157 / PYR-1) (Mycobacterium vanbaalenii).